Here is a 512-residue protein sequence, read N- to C-terminus: D-alanine--D-alanyl carrier protein ligase (512 aa).

152-153 (TS) is a binding site for ATP. D199 lines the D-alanine pocket. ATP is bound at residue 294–299 (NAYGPT). V303 contributes to the D-alanine binding site. ATP-binding positions include D385, 397–400 (YGGR), and K499. A D-alanine-binding site is contributed by K499.

It belongs to the ATP-dependent AMP-binding enzyme family. DltA subfamily.

It is found in the cytoplasm. It carries out the reaction holo-[D-alanyl-carrier protein] + D-alanine + ATP = D-alanyl-[D-alanyl-carrier protein] + AMP + diphosphate. Its pathway is cell wall biogenesis; lipoteichoic acid biosynthesis. Functionally, catalyzes the first step in the D-alanylation of lipoteichoic acid (LTA), the activation of D-alanine and its transfer onto the D-alanyl carrier protein (Dcp) DltC. In an ATP-dependent two-step reaction, forms a high energy D-alanyl-AMP intermediate, followed by transfer of the D-alanyl residue as a thiol ester to the phosphopantheinyl prosthetic group of the Dcp. D-alanylation of LTA plays an important role in modulating the properties of the cell wall in Gram-positive bacteria, influencing the net charge of the cell wall. The sequence is that of D-alanine--D-alanyl carrier protein ligase from Streptococcus pyogenes serotype M4 (strain MGAS10750).